The sequence spans 619 residues: TBC domain-containing protein C1952.17c (619 aa).

Residues 34-387 (PDEYSLRAKA…RLWDSIIADQ (354 aa)) form the Rab-GAP TBC domain.

The protein localises to the cytoplasm. Functionally, may act as a GTPase-activating protein for Rab family protein(s). This chain is TBC domain-containing protein C1952.17c, found in Schizosaccharomyces pombe (strain 972 / ATCC 24843) (Fission yeast).